A 439-amino-acid polypeptide reads, in one-letter code: tRNA-2-methylthio-N(6)-dimethylallyladenosine synthase (439 aa).

The 117-residue stretch at 1–117 folds into the MTTase N-terminal domain; the sequence is MKFYIRTFGC…IGNLVKRALN (117 aa). Residues C10, C46, C80, C153, C157, and C160 each contribute to the [4Fe-4S] cluster site. Residues 139–371 enclose the Radical SAM core domain; sequence PISKHHAWIT…MELQKRINLE (233 aa). The region spanning 369–436 is the TRAM domain; the sequence is NLEENEKYLE…PGPLYGEVVN (68 aa).

The protein belongs to the methylthiotransferase family. MiaB subfamily. In terms of assembly, monomer. [4Fe-4S] cluster serves as cofactor.

The protein resides in the cytoplasm. The enzyme catalyses N(6)-dimethylallyladenosine(37) in tRNA + (sulfur carrier)-SH + AH2 + 2 S-adenosyl-L-methionine = 2-methylsulfanyl-N(6)-dimethylallyladenosine(37) in tRNA + (sulfur carrier)-H + 5'-deoxyadenosine + L-methionine + A + S-adenosyl-L-homocysteine + 2 H(+). Catalyzes the methylthiolation of N6-(dimethylallyl)adenosine (i(6)A), leading to the formation of 2-methylthio-N6-(dimethylallyl)adenosine (ms(2)i(6)A) at position 37 in tRNAs that read codons beginning with uridine. This is tRNA-2-methylthio-N(6)-dimethylallyladenosine synthase from Petrotoga mobilis (strain DSM 10674 / SJ95).